The chain runs to 340 residues: Glycerol-3-phosphate dehydrogenase [NAD(P)+] (340 aa).

Positions 11, 33, and 110 each coordinate NADPH. Sn-glycerol 3-phosphate contacts are provided by lysine 110, glycine 144, and serine 146. Residue alanine 148 coordinates NADPH. Sn-glycerol 3-phosphate-binding residues include lysine 199, aspartate 252, serine 262, arginine 263, and asparagine 264. Residue lysine 199 is the Proton acceptor of the active site. Residue arginine 263 participates in NADPH binding. The NADPH site is built by valine 287 and glutamate 289.

Belongs to the NAD-dependent glycerol-3-phosphate dehydrogenase family.

It is found in the cytoplasm. It carries out the reaction sn-glycerol 3-phosphate + NAD(+) = dihydroxyacetone phosphate + NADH + H(+). The catalysed reaction is sn-glycerol 3-phosphate + NADP(+) = dihydroxyacetone phosphate + NADPH + H(+). The protein operates within membrane lipid metabolism; glycerophospholipid metabolism. Catalyzes the reduction of the glycolytic intermediate dihydroxyacetone phosphate (DHAP) to sn-glycerol 3-phosphate (G3P), the key precursor for phospholipid synthesis. This chain is Glycerol-3-phosphate dehydrogenase [NAD(P)+], found in Polynucleobacter necessarius subsp. necessarius (strain STIR1).